The sequence spans 198 residues: Superoxide dismutase [Fe] (198 aa).

Fe cation contacts are provided by His27, His74, Asp157, and His161.

The protein belongs to the iron/manganese superoxide dismutase family. In terms of assembly, homodimer. Fe cation is required as a cofactor.

It catalyses the reaction 2 superoxide + 2 H(+) = H2O2 + O2. Destroys superoxide anion radicals which are normally produced within the cells and which are toxic to biological systems. In Pseudomonas putida (strain ATCC 47054 / DSM 6125 / CFBP 8728 / NCIMB 11950 / KT2440), this protein is Superoxide dismutase [Fe] (sodB).